The chain runs to 467 residues: Zinc finger protein ZIC 3 (467 aa).

Residues Leu-66–Ala-107 are disordered. Residues Ser-67–Gly-80 are compositionally biased toward polar residues. Positions Gly-86–Thr-98 are enriched in basic residues. Lys-248 participates in a covalent cross-link: Glycyl lysine isopeptide (Lys-Gly) (interchain with G-Cter in SUMO2). The C2H2-type 1; atypical zinc-finger motif lies at Leu-251 to His-286. Residues His-295–His-322 form a C2H2-type 2; atypical zinc finger. 2 consecutive short sequence motifs (nuclear localization signal) follow at residues Cys-297–His-322 and Cys-330–His-352. 3 consecutive C2H2-type zinc fingers follow at residues Phe-328–His-352, Phe-358–His-382, and Tyr-388–His-410. A disordered region spans residues Arg-404 to Val-467. The span at Ser-412 to Ser-428 shows a compositional bias: low complexity. Over residues Ser-435–Asn-455 the composition is skewed to polar residues.

It belongs to the GLI C2H2-type zinc-finger protein family. As to quaternary structure, interacts (via the C2H2-type domains 3, 4 and 5) with MDFIC (via the C2H2-type domains 3, 4 and 5); the interaction reduces its transcriptional activity. Interacts with KPNA1 and KPNA6. Interacts (via C2H2-type domains 3, 4 and 5) with GLI3; the interaction enhances its transcriptional activity.

Its subcellular location is the nucleus. The protein resides in the cytoplasm. Functionally, acts as a transcriptional activator. Required in the earliest stages in both axial midline development and left-right (LR) asymmetry specification. Binds to the minimal GLI-consensus sequence 5'-GGGTGGTC-3'. The protein is Zinc finger protein ZIC 3 (ZIC3) of Homo sapiens (Human).